Consider the following 319-residue polypeptide: MLLWVLALLFLCAFLWNYKGQLKIADIADKYIFITGCDSGFGNLAARTFDRKGFRVIAACLTESGSEALKAKTSERLHTVLLDVTNPENVKETAQWVKSHVGEKGLWGLINNAGVLGVLAPTDWLTVDDYREPIEVNLFGLINVTLNMLPLVKKARGRVINVSSIGGRLAFGGGGYTPSKYAVEGFNDSLRRDMKAFGVHVSCIEPGLFKTGLADPIKTTEKKLAIWKHLSPDIKQQYGEGYIEKSLHRLKSSTSSVNLDLSLVVECMDHALTSLFPKTRYTAGKDAKTFWIPLSHMPAALQDFLLLKEKVELANPQAV.

The N-terminal stretch at Met-1–Gly-20 is a signal peptide. NAD(+)-binding positions include Ile-34–Ala-58 and Asp-83. Ser-164 serves as a coordination point for substrate. Tyr-176 serves as the catalytic Proton acceptor. Lys-180 provides a ligand contact to NAD(+).

The protein belongs to the short-chain dehydrogenases/reductases (SDR) family. As to quaternary structure, homotetramer. As to expression, highly expressed in epithelium of estrus uterus.

The protein localises to the microsome membrane. It is found in the endoplasmic reticulum membrane. It carries out the reaction 3beta-hydroxy-5alpha-pregnane-20-one + NAD(+) = 5alpha-pregnane-3,20-dione + NADH + H(+). The enzyme catalyses 17beta-hydroxy-5alpha-androstan-3-one + NAD(+) = 5alpha-androstan-3,17-dione + NADH + H(+). It catalyses the reaction androsterone + NAD(+) = 5alpha-androstan-3,17-dione + NADH + H(+). The catalysed reaction is 5alpha-androstane-3alpha,17beta-diol + NAD(+) = 17beta-hydroxy-5alpha-androstan-3-one + NADH + H(+). It carries out the reaction all-trans-retinol + NAD(+) = all-trans-retinal + NADH + H(+). The enzyme catalyses 3alpha-hydroxy-5alpha-pregnan-20-one + NAD(+) = 5alpha-pregnane-3,20-dione + NADH + H(+). Its function is as follows. 3-alpha-hydroxysteroid dehydrogenase that converts 3-alpha-tetrahydroprogesterone (allopregnanolone) to dihydroxyprogesterone and 3-alpha-androstanediol to dihydroxyprogesterone. Plays also role in the biosynthesis of retinoic acid from retinaldehyde. Can utilize both NADH and NADPH. This is Dehydrogenase/reductase SDR family member 9 (Dhrs9) from Rattus norvegicus (Rat).